A 287-amino-acid chain; its full sequence is ATP synthase gamma chain (287 aa).

It belongs to the ATPase gamma chain family. In terms of assembly, F-type ATPases have 2 components, CF(1) - the catalytic core - and CF(0) - the membrane proton channel. CF(1) has five subunits: alpha(3), beta(3), gamma(1), delta(1), epsilon(1). CF(0) has three main subunits: a, b and c.

It is found in the cell inner membrane. Produces ATP from ADP in the presence of a proton gradient across the membrane. The gamma chain is believed to be important in regulating ATPase activity and the flow of protons through the CF(0) complex. The chain is ATP synthase gamma chain from Shigella boydii serotype 4 (strain Sb227).